Consider the following 716-residue polypeptide: Beta-galactosidase (716 aa).

Catalysis depends on Glu389, which acts as the Proton donor. The active-site Nucleophile is Glu462.

It belongs to the glycosyl hydrolase 2 family. As to quaternary structure, homodimer.

The enzyme catalyses Hydrolysis of terminal non-reducing beta-D-galactose residues in beta-D-galactosides.. Functionally, displays beta-galactosidase activity with the artificial chromogenic substrate o-nitrophenyl-beta-D-galactopyranoside (ONPG). The polypeptide is Beta-galactosidase (Thermoanaerobacterium thermosulfurigenes (Clostridium thermosulfurogenes)).